The sequence spans 205 residues: GTP cyclohydrolase-2 (205 aa).

49-53 (RLHSE) serves as a coordination point for GTP. Zn(2+) contacts are provided by Cys-54, Cys-65, and Cys-67. GTP-binding positions include Gln-70, 92-94 (EGR), and Thr-114. The Proton acceptor role is filled by Asp-126. Catalysis depends on Arg-128, which acts as the Nucleophile. The GTP site is built by Thr-149 and Lys-154.

It belongs to the GTP cyclohydrolase II family. Zn(2+) is required as a cofactor.

The catalysed reaction is GTP + 4 H2O = 2,5-diamino-6-hydroxy-4-(5-phosphoribosylamino)-pyrimidine + formate + 2 phosphate + 3 H(+). The protein operates within cofactor biosynthesis; riboflavin biosynthesis; 5-amino-6-(D-ribitylamino)uracil from GTP: step 1/4. Its function is as follows. Catalyzes the conversion of GTP to 2,5-diamino-6-ribosylamino-4(3H)-pyrimidinone 5'-phosphate (DARP), formate and pyrophosphate. This chain is GTP cyclohydrolase-2, found in Pseudomonas putida (strain W619).